Here is a 149-residue protein sequence, read N- to C-terminus: D-aminoacyl-tRNA deacylase (149 aa).

Residues 137–138 (GP) carry the Gly-cisPro motif, important for rejection of L-amino acids motif.

This sequence belongs to the DTD family. As to quaternary structure, homodimer.

The protein resides in the cytoplasm. The enzyme catalyses glycyl-tRNA(Ala) + H2O = tRNA(Ala) + glycine + H(+). The catalysed reaction is a D-aminoacyl-tRNA + H2O = a tRNA + a D-alpha-amino acid + H(+). Functionally, an aminoacyl-tRNA editing enzyme that deacylates mischarged D-aminoacyl-tRNAs. Also deacylates mischarged glycyl-tRNA(Ala), protecting cells against glycine mischarging by AlaRS. Acts via tRNA-based rather than protein-based catalysis; rejects L-amino acids rather than detecting D-amino acids in the active site. By recycling D-aminoacyl-tRNA to D-amino acids and free tRNA molecules, this enzyme counteracts the toxicity associated with the formation of D-aminoacyl-tRNA entities in vivo and helps enforce protein L-homochirality. This is D-aminoacyl-tRNA deacylase from Clostridium botulinum (strain Eklund 17B / Type B).